Reading from the N-terminus, the 449-residue chain is Omega-amino acid--pyruvate aminotransferase (449 aa).

Trp-60 is a substrate binding site. Residue 119–120 (GS) coordinates pyridoxal 5'-phosphate. An N6-(pyridoxal phosphate)lysine modification is found at Lys-288. Residue Thr-327 participates in pyridoxal 5'-phosphate binding. Substrate is bound by residues Arg-414 and Gln-421.

It belongs to the class-III pyridoxal-phosphate-dependent aminotransferase family. As to quaternary structure, homotetramer. Requires pyridoxal 5'-phosphate as cofactor.

It catalyses the reaction 3-oxopropanoate + L-alanine = beta-alanine + pyruvate. Catalyzes transamination between a variety of omega-amino acids, mono and diamines, and pyruvate. Plays a pivotal role in the metabolism of the omega amino acids. In Pseudomonas putida (Arthrobacter siderocapsulatus), this protein is Omega-amino acid--pyruvate aminotransferase.